The chain runs to 375 residues: Alanine racemase (375 aa).

Lys35 functions as the Proton acceptor; specific for D-alanine in the catalytic mechanism. The residue at position 35 (Lys35) is an N6-(pyridoxal phosphate)lysine. Arg130 serves as a coordination point for substrate. Tyr253 functions as the Proton acceptor; specific for L-alanine in the catalytic mechanism. Substrate is bound at residue Met305.

It belongs to the alanine racemase family. Pyridoxal 5'-phosphate serves as cofactor.

It carries out the reaction L-alanine = D-alanine. Its pathway is amino-acid biosynthesis; D-alanine biosynthesis; D-alanine from L-alanine: step 1/1. Functionally, catalyzes the interconversion of L-alanine and D-alanine. May also act on other amino acids. The protein is Alanine racemase (alr) of Ralstonia nicotianae (strain ATCC BAA-1114 / GMI1000) (Ralstonia solanacearum).